The chain runs to 580 residues: F-box only protein 24 (580 aa).

Residues proline 36–isoleucine 82 form the F-box domain. The RCC1 repeat unit spans residues glycine 376 to serine 425.

As to quaternary structure, directly interacts with SKP1 and CUL1.

Substrate-recognition component of the SCF (SKP1-CUL1-F-box protein)-type E3 ubiquitin ligase complex. This Homo sapiens (Human) protein is F-box only protein 24 (FBXO24).